Reading from the N-terminus, the 89-residue chain is Putative regulatory protein MAE_11840 (89 aa).

Belongs to the RemA family.

The chain is Putative regulatory protein MAE_11840 from Microcystis aeruginosa (strain NIES-843 / IAM M-2473).